The sequence spans 318 residues: Malonyl CoA-acyl carrier protein transacylase, mitochondrial (318 aa).

The protein belongs to the FabD family.

The protein resides in the mitochondrion. It carries out the reaction holo-[ACP] + malonyl-CoA = malonyl-[ACP] + CoA. It participates in lipid metabolism; fatty acid biosynthesis. Functionally, involved in biosynthesis of fatty acids in mitochondria. This Schizosaccharomyces pombe (strain 972 / ATCC 24843) (Fission yeast) protein is Malonyl CoA-acyl carrier protein transacylase, mitochondrial (mct1).